We begin with the raw amino-acid sequence, 375 residues long: MSKRDYYEVLGVARGASDEELKKAYRRCAMKHHPDRNPGDAAAEAAFKECKEAYEVLSDGNKRRAYDAHGHAAFEHGMGGGGGPGGPDMGDIFGDIFGNIFGGGAAGPRAARRGADVGYVLELDLEEAVAGIERRIEIPTLVECAPCHGSGSEDGKVETCGTCHGRGQVRIQRGIFAMQQSCPHCDGRGTLIQNPCKTCHGAGRVEEDKVLSIKVPAGVDTGDRIRLAGEGEAGPAGTPPGDLYVEVRVREHAIFQRDGDDLHCEVPIRISQAALGDTVRVATLGGEAEIRIPAETQTGKLFRLRGKGVRSVRSRSEGDLYCRVVVETPVNLTADQRELLQQFEATFTGEDARKHSPKSATFIDGVKGFWDRMTS.

The 66-residue stretch at 5–70 (DYYEVLGVAR…NKRRAYDAHG (66 aa)) folds into the J domain. The CR-type zinc-finger motif lies at 131–208 (GIERRIEIPT…CHGAGRVEED (78 aa)). 8 residues coordinate Zn(2+): Cys144, Cys147, Cys160, Cys163, Cys182, Cys185, Cys196, and Cys199. CXXCXGXG motif repeat units follow at residues 144-151 (CAPCHGSG), 160-167 (CGTCHGRG), 182-189 (CPHCDGRG), and 196-203 (CKTCHGAG).

The protein belongs to the DnaJ family. Homodimer. Zn(2+) serves as cofactor.

The protein localises to the cytoplasm. In terms of biological role, participates actively in the response to hyperosmotic and heat shock by preventing the aggregation of stress-denatured proteins and by disaggregating proteins, also in an autonomous, DnaK-independent fashion. Unfolded proteins bind initially to DnaJ; upon interaction with the DnaJ-bound protein, DnaK hydrolyzes its bound ATP, resulting in the formation of a stable complex. GrpE releases ADP from DnaK; ATP binding to DnaK triggers the release of the substrate protein, thus completing the reaction cycle. Several rounds of ATP-dependent interactions between DnaJ, DnaK and GrpE are required for fully efficient folding. Also involved, together with DnaK and GrpE, in the DNA replication of plasmids through activation of initiation proteins. In Xanthomonas euvesicatoria pv. vesicatoria (strain 85-10) (Xanthomonas campestris pv. vesicatoria), this protein is Chaperone protein DnaJ.